Here is a 278-residue protein sequence, read N- to C-terminus: Diaminopimelate epimerase (278 aa).

Positions 11 and 63 each coordinate substrate. Cysteine 72 functions as the Proton donor in the catalytic mechanism. Substrate-binding positions include 73 to 74 (GN), asparagine 160, asparagine 193, and 211 to 212 (ER). The active-site Proton acceptor is cysteine 220. Substrate is bound at residue 221–222 (GT).

The protein belongs to the diaminopimelate epimerase family. As to quaternary structure, homodimer.

It is found in the cytoplasm. The catalysed reaction is (2S,6S)-2,6-diaminopimelate = meso-2,6-diaminopimelate. It participates in amino-acid biosynthesis; L-lysine biosynthesis via DAP pathway; DL-2,6-diaminopimelate from LL-2,6-diaminopimelate: step 1/1. Functionally, catalyzes the stereoinversion of LL-2,6-diaminopimelate (L,L-DAP) to meso-diaminopimelate (meso-DAP), a precursor of L-lysine and an essential component of the bacterial peptidoglycan. The protein is Diaminopimelate epimerase of Desulforudis audaxviator (strain MP104C).